The sequence spans 101 residues: Small ribosomal subunit protein bS18c (101 aa).

This sequence belongs to the bacterial ribosomal protein bS18 family. Part of the 30S ribosomal subunit.

It is found in the plastid. Its subcellular location is the chloroplast. This is Small ribosomal subunit protein bS18c (rps18) from Arabidopsis thaliana (Mouse-ear cress).